The following is a 143-amino-acid chain: MVTRDVVAQGTFDILHPGHVHYLREAKAMGDRLHVIVARSENVTHKAPPVVPDRQRVEMVEALDPVDYARLGHAEDIFVPIEQIEPDVIALGYDQHHEVEGIETALDERGLDCEVRRAGPRKASEDEILSTGSIIEKILDERS.

Residues 11 to 12 (TF), 16 to 19 (HPGH), and Asp94 contribute to the ATP site.

Belongs to the archaeal FAD synthase family. As to quaternary structure, homodimer. The cofactor is a divalent metal cation.

The catalysed reaction is FMN + ATP + H(+) = FAD + diphosphate. It participates in cofactor biosynthesis; FAD biosynthesis; FAD from FMN: step 1/1. Catalyzes the transfer of the AMP portion of ATP to flavin mononucleotide (FMN) to produce flavin adenine dinucleotide (FAD) coenzyme. The chain is FAD synthase from Halomicrobium mukohataei (strain ATCC 700874 / DSM 12286 / JCM 9738 / NCIMB 13541) (Haloarcula mukohataei).